We begin with the raw amino-acid sequence, 72 residues long: Male-specific sperm protein Mst84Dd (72 aa).

The protein belongs to the MST(3)CGP family. Testis.

This Drosophila melanogaster (Fruit fly) protein is Male-specific sperm protein Mst84Dd (Mst84Dd).